The following is a 477-amino-acid chain: UDP-N-acetylmuramate--L-alanine ligase (477 aa).

118–124 (GTHGKTS) provides a ligand contact to ATP.

Belongs to the MurCDEF family.

It is found in the cytoplasm. It catalyses the reaction UDP-N-acetyl-alpha-D-muramate + L-alanine + ATP = UDP-N-acetyl-alpha-D-muramoyl-L-alanine + ADP + phosphate + H(+). The protein operates within cell wall biogenesis; peptidoglycan biosynthesis. Cell wall formation. This chain is UDP-N-acetylmuramate--L-alanine ligase, found in Corynebacterium diphtheriae (strain ATCC 700971 / NCTC 13129 / Biotype gravis).